The sequence spans 185 residues: MLEDVIKELREGIEKAIEALRRDLAKVRTGRANAAMLDGIRVDYYGVPTPIVQMATVSVPEPRLISVKPWEKNQVKAIEKAIRESDLGLNPQVDADLIRLPIPPLTEERRREMVKLTKKNGEDCKVAIRKHRRDANEMIDSLEKDGDVSGDEADRAKKKVDDVVAEGTKLVDTVIAGKEKDILDV.

The tract at residues Ile-139 to Lys-159 is disordered. Residues Ser-141–Lys-159 are compositionally biased toward basic and acidic residues.

The protein belongs to the RRF family.

It is found in the cytoplasm. Its function is as follows. Responsible for the release of ribosomes from messenger RNA at the termination of protein biosynthesis. May increase the efficiency of translation by recycling ribosomes from one round of translation to another. The chain is Ribosome-recycling factor from Sorangium cellulosum (strain So ce56) (Polyangium cellulosum (strain So ce56)).